The sequence spans 87 residues: UPF0335 protein RHECIAT_CH0003797 (87 aa).

The protein belongs to the UPF0335 family.

The protein is UPF0335 protein RHECIAT_CH0003797 of Rhizobium etli (strain CIAT 652).